Here is a 289-residue protein sequence, read N- to C-terminus: Tachykinins (289 aa).

Positions 1–24 (MRSQGGSFAVALLLLLLLTAAATA) are cleaved as a signal peptide. A propeptide spanning residues 25–49 (ADAEPDVESSVSTLPPGADAPRRMV) is cleaved from the precursor. The segment at 28–80 (EPDVESSVSTLPPGADAPRRMVKRAPTSSFIGMRGKKEDEKDQRAADWMGPDP) is disordered. The residue at position 61 (Arg61) is an Arginine amide. Positions 62-72 (GKKEDEKDQRA) are enriched in basic and acidic residues. The residue at position 95 (Asn95) is an Asparagine amide. Arg110 carries the arginine amide modification. Residue Val155 is modified to Valine amide. Positions 156–175 (GKRAPTGFTGMRGKRPMSGD) are disordered. 4 positions are modified to arginine amide: Arg167, Arg198, Arg237, and Arg281. Positions 285 to 289 (PALAE) are excised as a propeptide.

The protein belongs to the tachykinin family.

It is found in the secreted. Tachykinins are active peptides which excite neurons, evoke behavioral responses, are potent vasodilators and secretagogues, and contract (directly or indirectly) many smooth muscles. Stimulates gut muscle contractions. The chain is Tachykinins from Drosophila pseudoobscura pseudoobscura (Fruit fly).